The chain runs to 539 residues: CTP synthase (539 aa).

The segment at 1 to 268 (MADTKYIFVT…DETVLRKVGL (268 aa)) is amidoligase domain. Serine 15 provides a ligand contact to CTP. Serine 15 is a binding site for UTP. Residue 16–21 (SLGKGI) coordinates ATP. Tyrosine 56 lines the L-glutamine pocket. Aspartate 73 contributes to the ATP binding site. Aspartate 73 and glutamate 143 together coordinate Mg(2+). Residues 150 to 152 (DIE), 189 to 194 (KTKPTQ), and lysine 225 contribute to the CTP site. UTP is bound by residues 189 to 194 (KTKPTQ) and lysine 225. The 243-residue stretch at 294–536 (TIALVGKYVE…IREAIKTRKK (243 aa)) folds into the Glutamine amidotransferase type-1 domain. Residue glycine 356 participates in L-glutamine binding. The Nucleophile; for glutamine hydrolysis role is filled by cysteine 383. Residues 384–387 (LGMQ), glutamate 407, and arginine 464 contribute to the L-glutamine site. Catalysis depends on residues histidine 509 and glutamate 511.

The protein belongs to the CTP synthase family. Homotetramer.

It carries out the reaction UTP + L-glutamine + ATP + H2O = CTP + L-glutamate + ADP + phosphate + 2 H(+). The catalysed reaction is L-glutamine + H2O = L-glutamate + NH4(+). The enzyme catalyses UTP + NH4(+) + ATP = CTP + ADP + phosphate + 2 H(+). It participates in pyrimidine metabolism; CTP biosynthesis via de novo pathway; CTP from UDP: step 2/2. Its activity is regulated as follows. Allosterically activated by GTP, when glutamine is the substrate; GTP has no effect on the reaction when ammonia is the substrate. The allosteric effector GTP functions by stabilizing the protein conformation that binds the tetrahedral intermediate(s) formed during glutamine hydrolysis. Inhibited by the product CTP, via allosteric rather than competitive inhibition. Its function is as follows. Catalyzes the ATP-dependent amination of UTP to CTP with either L-glutamine or ammonia as the source of nitrogen. Regulates intracellular CTP levels through interactions with the four ribonucleotide triphosphates. The protein is CTP synthase of Porphyromonas gingivalis (strain ATCC 33277 / DSM 20709 / CIP 103683 / JCM 12257 / NCTC 11834 / 2561).